A 449-amino-acid chain; its full sequence is Adenylyltransferase and sulfurtransferase MOCS3 (449 aa).

ATP is bound by residues Gly-96, Asp-117, 124–128 (SNLHR), Lys-141, and 185–186 (DN). Positions 227 and 230 each coordinate Zn(2+). Catalysis depends on Cys-244, which acts as the Glycyl thioester intermediate; for adenylyltransferase activity. Zn(2+)-binding residues include Cys-302 and Cys-305. The region spanning 351-447 (QDKPHLLLDV…WTNQIDENFP (97 aa)) is the Rhodanese domain. Catalysis depends on Cys-406, which acts as the Cysteine persulfide intermediate; for sulfurtransferase activity.

This sequence in the N-terminal section; belongs to the HesA/MoeB/ThiF family. UBA4 subfamily. It depends on Zn(2+) as a cofactor.

It localises to the cytoplasm. The protein resides in the cytosol. It catalyses the reaction [molybdopterin-synthase sulfur-carrier protein]-C-terminal Gly-Gly + ATP + H(+) = [molybdopterin-synthase sulfur-carrier protein]-C-terminal Gly-Gly-AMP + diphosphate. The enzyme catalyses [molybdopterin-synthase sulfur-carrier protein]-C-terminal Gly-Gly-AMP + S-sulfanyl-L-cysteinyl-[cysteine desulfurase] + AH2 = [molybdopterin-synthase sulfur-carrier protein]-C-terminal-Gly-aminoethanethioate + L-cysteinyl-[cysteine desulfurase] + A + AMP + 2 H(+). It participates in tRNA modification; 5-methoxycarbonylmethyl-2-thiouridine-tRNA biosynthesis. It functions in the pathway cofactor biosynthesis; molybdopterin biosynthesis. Plays a central role in 2-thiolation of mcm(5)S(2)U at tRNA wobble positions of cytosolic tRNA(Lys), tRNA(Glu) and tRNA(Gln). Also essential during biosynthesis of the molybdenum cofactor. Acts by mediating the C-terminal thiocarboxylation of sulfur carriers URM1 and MOCS2A. Its N-terminus first activates URM1 and MOCS2A as acyl-adenylates (-COAMP), then the persulfide sulfur on the catalytic cysteine is transferred to URM1 and MOCS2A to form thiocarboxylation (-COSH) of their C-terminus. The reaction probably involves hydrogen sulfide that is generated from the persulfide intermediate and that acts as a nucleophile towards URM1 and MOCS2A. Subsequently, a transient disulfide bond is formed. Does not use thiosulfate as sulfur donor; NFS1 probably acting as a sulfur donor for thiocarboxylation reactions. This is Adenylyltransferase and sulfurtransferase MOCS3 from Drosophila grimshawi (Hawaiian fruit fly).